The following is a 464-amino-acid chain: Mitogen-activated protein kinase 10 (464 aa).

Positions 64 to 359 constitute a Protein kinase domain; that stretch reads YQNLKPIGSG…VDDALQHPYI (296 aa). Residues 70 to 78 and Lys-93 each bind ATP; that span reads IGSGAQGIV. Residue Asp-189 is the Proton acceptor of the active site. Phosphothreonine; by MAP2K7 is present on Thr-221. A TXY motif is present at residues 221 to 223; the sequence is TPY. The residue at position 223 (Tyr-223) is a Phosphotyrosine; by MAP2K4. The segment at 405-464 is disordered; that stretch reads TKNGVVKGQPSPSGAAVNSSESLPPSSSVNDISSMSTDQTLASDTDSSLEASAGPLGCCR. Low complexity predominate over residues 423–432; sequence SSESLPPSSS. Residues 433 to 454 are compositionally biased toward polar residues; the sequence is VNDISSMSTDQTLASDTDSSLE. Residues Cys-462 and Cys-463 are each lipidated (S-palmitoyl cysteine).

The protein belongs to the protein kinase superfamily. CMGC Ser/Thr protein kinase family. MAP kinase subfamily. As to quaternary structure, interacts with MAPK8IP1/JIP-1 and MAPK8IP3/JIP-3/JSAP1. Interacts with SPAG9/MAPK8IP4/JIP4. Interacts with HDAC9 and MAPKBP1. Interacts with ARRB2; the interaction enhances MAPK10 activation by MAP3K5. Interacts with SARM1. Interacts with JUND; interaction is inhibited in the presence of MEN1. It depends on Mg(2+) as a cofactor. Dually phosphorylated on Thr-221 and Tyr-223 by MAP2K4 and MAP2K7, which activates the enzyme. MAP2K7 shows a strong preference for Thr-221 while MAP2K4 phosphorylates Tyr-223 preferentially. Weakly autophosphorylated on threonine and tyrosine residues in vitro. In terms of processing, palmitoylation regulates subcellular location and axonal development.

It localises to the cytoplasm. Its subcellular location is the membrane. It is found in the nucleus. The protein resides in the mitochondrion. It catalyses the reaction L-seryl-[protein] + ATP = O-phospho-L-seryl-[protein] + ADP + H(+). The enzyme catalyses L-threonyl-[protein] + ATP = O-phospho-L-threonyl-[protein] + ADP + H(+). Activated by threonine and tyrosine phosphorylation by two dual specificity kinases, MAP2K4 and MAP2K7. MAP2K7 phosphorylates MAPK10 on Thr-221 causing a conformational change and a large increase in Vmax for the enzyme. MAP2K4 then phosphorylates Tyr-223 resulting in a further increase in Vmax. Inhibited by dual specificity phosphatases, such as DUSP1. Inhibited by HDAC9. Its function is as follows. Serine/threonine-protein kinase involved in various processes such as neuronal proliferation, differentiation, migration and programmed cell death. Extracellular stimuli such as pro-inflammatory cytokines or physical stress stimulate the stress-activated protein kinase/c-Jun N-terminal kinase (SAP/JNK) signaling pathway. In this cascade, two dual specificity kinases MAP2K4/MKK4 and MAP2K7/MKK7 phosphorylate and activate MAPK10/JNK3. In turn, MAPK10/JNK3 phosphorylates a number of transcription factors, primarily components of AP-1 such as JUN and ATF2 and thus regulates AP-1 transcriptional activity. Plays regulatory roles in the signaling pathways during neuronal apoptosis. Phosphorylates the neuronal microtubule regulator STMN2. Acts in the regulation of the amyloid-beta precursor protein/APP signaling during neuronal differentiation by phosphorylating APP. Also participates in neurite growth in spiral ganglion neurons. Phosphorylates the CLOCK-BMAL1 heterodimer and plays a role in the photic regulation of the circadian clock. Phosphorylates JUND and this phosphorylation is inhibited in the presence of MEN1. This Rattus norvegicus (Rat) protein is Mitogen-activated protein kinase 10 (Mapk10).